The sequence spans 1357 residues: Mediator of RNA polymerase II transcription subunit 13 (1357 aa).

Disordered stretches follow at residues 356-391 (SCNY…GNGF) and 420-487 (DLWN…HRKE). Residues 435-451 (INPTSQQGDSARITSGS) show a composition bias toward polar residues.

The protein belongs to the Mediator complex subunit 13 family. In terms of assembly, component of the SRB8-11 complex, which itself associates with the Mediator complex.

It localises to the nucleus. Its function is as follows. Component of the SRB8-11 complex. The SRB8-11 complex is a regulatory module of the Mediator complex which is itself involved in regulation of basal and activated RNA polymerase II-dependent transcription. The SRB8-11 complex may be involved in the transcriptional repression of a subset of genes regulated by Mediator. It may inhibit the association of the Mediator complex with RNA polymerase II to form the holoenzyme complex. This chain is Mediator of RNA polymerase II transcription subunit 13 (SSN2), found in Eremothecium gossypii (strain ATCC 10895 / CBS 109.51 / FGSC 9923 / NRRL Y-1056) (Yeast).